Consider the following 236-residue polypeptide: Phosphoribosylaminoimidazole-succinocarboxamide synthase (236 aa).

This sequence belongs to the SAICAR synthetase family.

It catalyses the reaction 5-amino-1-(5-phospho-D-ribosyl)imidazole-4-carboxylate + L-aspartate + ATP = (2S)-2-[5-amino-1-(5-phospho-beta-D-ribosyl)imidazole-4-carboxamido]succinate + ADP + phosphate + 2 H(+). Its pathway is purine metabolism; IMP biosynthesis via de novo pathway; 5-amino-1-(5-phospho-D-ribosyl)imidazole-4-carboxamide from 5-amino-1-(5-phospho-D-ribosyl)imidazole-4-carboxylate: step 1/2. This chain is Phosphoribosylaminoimidazole-succinocarboxamide synthase, found in Pseudomonas paraeruginosa (strain DSM 24068 / PA7) (Pseudomonas aeruginosa (strain PA7)).